The sequence spans 406 residues: Phosphorylase b kinase gamma catalytic chain, liver/testis isoform (406 aa).

A Protein kinase domain is found at 24 to 291 (YDPKDIIGRG…AEQALQHPFF (268 aa)). ATP contacts are provided by residues 30–38 (IGRGVSSVV) and Lys53. Residue Asp153 is the Proton acceptor of the active site. Residues 306–330 (QRFRVAVWTILAAGRVALSSHRLRP) form a calmodulin-binding (domain-N) region. Residues 346–370 (VRRLIDNCAFRLYGHWVKKGEQQNR) are calmodulin-binding (domain-C).

The protein belongs to the protein kinase superfamily. CAMK Ser/Thr protein kinase family. As to quaternary structure, hexadecamer of 4 heterotetramers, each composed of alpha, beta, gamma, and delta subunits. Alpha (PHKA1 or PHKA2) and beta (PHKB) are regulatory subunits, gamma (PHKG1 or PHKG2) is the catalytic subunit, and delta is calmodulin.

The enzyme catalyses 2 ATP + phosphorylase b = 2 ADP + phosphorylase a.. Functionally, catalytic subunit of the phosphorylase b kinase (PHK), which mediates the neural and hormonal regulation of glycogen breakdown (glycogenolysis) by phosphorylating and thereby activating glycogen phosphorylase. May regulate glycogeneolysis in the testis. In vitro, phosphorylates PYGM. The protein is Phosphorylase b kinase gamma catalytic chain, liver/testis isoform (Phkg2) of Mus musculus (Mouse).